A 598-amino-acid polypeptide reads, in one-letter code: Aspartate--tRNA(Asp/Asn) ligase (598 aa).

Residue E173 participates in L-aspartate binding. The tract at residues 197 to 200 (QLFK) is aspartate. R219 serves as a coordination point for L-aspartate. Residues 219 to 221 (RDE) and Q228 each bind ATP. H448 provides a ligand contact to L-aspartate. E482 lines the ATP pocket. R489 is an L-aspartate binding site. Position 534 to 537 (534 to 537 (GWDR)) interacts with ATP. The segment at 560 to 598 (GYDPLTAAPAPITAQQRKEAGVDAKPETKKAAAGEPAGA) is disordered. Positions 575–591 (QRKEAGVDAKPETKKAA) are enriched in basic and acidic residues.

Belongs to the class-II aminoacyl-tRNA synthetase family. Type 1 subfamily. As to quaternary structure, homodimer.

It localises to the cytoplasm. The catalysed reaction is tRNA(Asx) + L-aspartate + ATP = L-aspartyl-tRNA(Asx) + AMP + diphosphate. Aspartyl-tRNA synthetase with relaxed tRNA specificity since it is able to aspartylate not only its cognate tRNA(Asp) but also tRNA(Asn). Reaction proceeds in two steps: L-aspartate is first activated by ATP to form Asp-AMP and then transferred to the acceptor end of tRNA(Asp/Asn). The chain is Aspartate--tRNA(Asp/Asn) ligase from Kineococcus radiotolerans (strain ATCC BAA-149 / DSM 14245 / SRS30216).